The following is a 294-amino-acid chain: Urease accessory protein UreD (294 aa).

The segment at 1 to 22 (MSVEKPVAAGRQNSKATGRHKG) is disordered.

It belongs to the UreD family. In terms of assembly, ureD, UreF and UreG form a complex that acts as a GTP-hydrolysis-dependent molecular chaperone, activating the urease apoprotein by helping to assemble the nickel containing metallocenter of UreC. The UreE protein probably delivers the nickel.

The protein localises to the cytoplasm. Required for maturation of urease via the functional incorporation of the urease nickel metallocenter. The sequence is that of Urease accessory protein UreD from Alcanivorax borkumensis (strain ATCC 700651 / DSM 11573 / NCIMB 13689 / SK2).